We begin with the raw amino-acid sequence, 319 residues long: Ester hydrolase C11orf54 homolog (319 aa).

Zn(2+) contacts are provided by H270, H272, and H282.

As to quaternary structure, monomer. It depends on Zn(2+) as a cofactor.

It localises to the nucleus. Its subcellular location is the cytoplasm. Its function is as follows. Exhibits ester hydrolase activity on the substrate p-nitrophenyl acetate, in vitro. May regulate DNA damage and repair by regulating HIF1A degradation via chaperone-mediated autophagy (CMA). This is Ester hydrolase C11orf54 homolog from Danio rerio (Zebrafish).